Here is a 298-residue protein sequence, read N- to C-terminus: Tyrosine recombinase XerC (298 aa).

A Core-binding (CB) domain is found at 1-83 (MHAAVERFLH…ALSRFADHLV (83 aa)). Residues 104–283 (HLPRPVDVDQ…DWQHLADAYD (180 aa)) enclose the Tyr recombinase domain. Active-site residues include arginine 144, lysine 166, histidine 235, arginine 238, and histidine 261. Tyrosine 270 acts as the O-(3'-phospho-DNA)-tyrosine intermediate in catalysis.

Belongs to the 'phage' integrase family. XerC subfamily. As to quaternary structure, forms a cyclic heterotetrameric complex composed of two molecules of XerC and two molecules of XerD.

It is found in the cytoplasm. Site-specific tyrosine recombinase, which acts by catalyzing the cutting and rejoining of the recombining DNA molecules. The XerC-XerD complex is essential to convert dimers of the bacterial chromosome into monomers to permit their segregation at cell division. It also contributes to the segregational stability of plasmids. In Chromohalobacter salexigens (strain ATCC BAA-138 / DSM 3043 / CIP 106854 / NCIMB 13768 / 1H11), this protein is Tyrosine recombinase XerC.